Reading from the N-terminus, the 325-residue chain is Beta-ketoacyl-[acyl-carrier-protein] synthase III (325 aa).

Catalysis depends on residues Cys112 and His250. The ACP-binding stretch occupies residues 251–255 (QANSR). Residue Asn280 is part of the active site.

This sequence belongs to the thiolase-like superfamily. FabH family. As to quaternary structure, homodimer.

It localises to the cytoplasm. The enzyme catalyses malonyl-[ACP] + acetyl-CoA + H(+) = 3-oxobutanoyl-[ACP] + CO2 + CoA. It participates in lipid metabolism; fatty acid biosynthesis. Catalyzes the condensation reaction of fatty acid synthesis by the addition to an acyl acceptor of two carbons from malonyl-ACP. Catalyzes the first condensation reaction which initiates fatty acid synthesis and may therefore play a role in governing the total rate of fatty acid production. Possesses both acetoacetyl-ACP synthase and acetyl transacylase activities. Its substrate specificity determines the biosynthesis of branched-chain and/or straight-chain of fatty acids. This Lactococcus lactis subsp. lactis (strain IL1403) (Streptococcus lactis) protein is Beta-ketoacyl-[acyl-carrier-protein] synthase III.